Here is a 273-residue protein sequence, read N- to C-terminus: Putative phosphoenolpyruvate synthase regulatory protein (273 aa).

ADP is bound at residue 153-160 (GVSRSGKT).

The protein belongs to the pyruvate, phosphate/water dikinase regulatory protein family. PSRP subfamily.

It catalyses the reaction [pyruvate, water dikinase] + ADP = [pyruvate, water dikinase]-phosphate + AMP + H(+). The enzyme catalyses [pyruvate, water dikinase]-phosphate + phosphate + H(+) = [pyruvate, water dikinase] + diphosphate. In terms of biological role, bifunctional serine/threonine kinase and phosphorylase involved in the regulation of the phosphoenolpyruvate synthase (PEPS) by catalyzing its phosphorylation/dephosphorylation. This Polaromonas naphthalenivorans (strain CJ2) protein is Putative phosphoenolpyruvate synthase regulatory protein.